Here is a 59-residue protein sequence, read N- to C-terminus: Photosystem II reaction center protein K (59 aa).

Residues 1 to 22 constitute a propeptide that is removed on maturation; the sequence is MLNIFSLICLNSALYSSSFFFG. A helical transmembrane segment spans residues 30–50; that stretch reads FLSPIVDFMPVIPLFFFLLAF.

In terms of assembly, PSII is composed of 1 copy each of membrane proteins PsbA, PsbB, PsbC, PsbD, PsbE, PsbF, PsbH, PsbI, PsbJ, PsbK, PsbL, PsbM, PsbT, PsbX, PsbY, PsbZ, Psb30/Ycf12, at least 3 peripheral proteins of the oxygen-evolving complex and a large number of cofactors. It forms dimeric complexes. This protein, PsbL and plastoquinone-9 are found in PSII dimers but not seen in PSII monomers.

It is found in the plastid. It localises to the chloroplast thylakoid membrane. Functionally, one of the components of the core complex of photosystem II (PSII). PSII is a light-driven water:plastoquinone oxidoreductase that uses light energy to abstract electrons from H(2)O, generating O(2) and a proton gradient subsequently used for ATP formation. It consists of a core antenna complex that captures photons, and an electron transfer chain that converts photonic excitation into a charge separation. May be involved in PSII dimerization. In terms of biological role, one of the components of the core complex of photosystem II (PSII). PSII is a light-driven water:plastoquinone oxidoreductase that uses light energy to abstract electrons from H(2)O, generating O(2) and a proton gradient subsequently used for ATP formation. It consists of a core antenna complex that captures photons, and an electron transfer chain that converts photonic excitation into a charge separation. The polypeptide is Photosystem II reaction center protein K (Spinacia oleracea (Spinach)).